The following is a 1216-amino-acid chain: ATP-dependent helicase/nuclease subunit A (1216 aa).

Residues 26 to 488 form the UvrD-like helicase ATP-binding domain; it reads QKKTAEQIEA…IILKENFRSS (463 aa). 47-54 is an ATP binding site; sequence ASAGSGKT. The region spanning 515–802 is the UvrD-like helicase C-terminal domain; it reads KHQLVFANTK…ELMTIHKSKG (288 aa).

This sequence belongs to the helicase family. AddA subfamily. In terms of assembly, heterodimer of AddA and AddB/RexB. It depends on Mg(2+) as a cofactor.

It catalyses the reaction Couples ATP hydrolysis with the unwinding of duplex DNA by translocating in the 3'-5' direction.. It carries out the reaction ATP + H2O = ADP + phosphate + H(+). In terms of biological role, the heterodimer acts as both an ATP-dependent DNA helicase and an ATP-dependent, dual-direction single-stranded exonuclease. Recognizes the chi site generating a DNA molecule suitable for the initiation of homologous recombination. The AddA nuclease domain is required for chi fragment generation; this subunit has the helicase and 3' -&gt; 5' nuclease activities. This chain is ATP-dependent helicase/nuclease subunit A, found in Streptococcus pneumoniae serotype 2 (strain D39 / NCTC 7466).